We begin with the raw amino-acid sequence, 208 residues long: Probable acyl-homoserine-lactone synthase (208 aa).

It belongs to the autoinducer synthase family.

It carries out the reaction a fatty acyl-[ACP] + S-adenosyl-L-methionine = an N-acyl-L-homoserine lactone + S-methyl-5'-thioadenosine + holo-[ACP] + H(+). In terms of biological role, required for the synthesis of OHHL (N-(3-oxooctanoyl)-L-homoserine lactone), an autoinducer molecule which binds to TraR and thus acts in the control of conjugal transfer. The polypeptide is Probable acyl-homoserine-lactone synthase (traI) (Sinorhizobium fredii (strain NBRC 101917 / NGR234)).